The chain runs to 238 residues: 3-dehydroquinate dehydratase (238 aa).

3-dehydroquinate-binding positions include 35 to 37 (ELR) and R70. H133 (proton donor/acceptor) is an active-site residue. K160 functions as the Schiff-base intermediate with substrate in the catalytic mechanism. 3-dehydroquinate is bound by residues R202 and Q225.

This sequence belongs to the type-I 3-dehydroquinase family. Homodimer.

It carries out the reaction 3-dehydroquinate = 3-dehydroshikimate + H2O. The protein operates within metabolic intermediate biosynthesis; chorismate biosynthesis; chorismate from D-erythrose 4-phosphate and phosphoenolpyruvate: step 3/7. In terms of biological role, involved in the third step of the chorismate pathway, which leads to the biosynthesis of aromatic amino acids. Catalyzes the cis-dehydration of 3-dehydroquinate (DHQ) and introduces the first double bond of the aromatic ring to yield 3-dehydroshikimate. The sequence is that of 3-dehydroquinate dehydratase from Staphylococcus aureus (strain USA300).